A 119-amino-acid chain; its full sequence is Ribosome-binding factor A (119 aa).

It belongs to the RbfA family. In terms of assembly, monomer. Binds 30S ribosomal subunits, but not 50S ribosomal subunits or 70S ribosomes.

It is found in the cytoplasm. One of several proteins that assist in the late maturation steps of the functional core of the 30S ribosomal subunit. Associates with free 30S ribosomal subunits (but not with 30S subunits that are part of 70S ribosomes or polysomes). Required for efficient processing of 16S rRNA. May interact with the 5'-terminal helix region of 16S rRNA. The protein is Ribosome-binding factor A of Chlorobium luteolum (strain DSM 273 / BCRC 81028 / 2530) (Pelodictyon luteolum).